A 403-amino-acid polypeptide reads, in one-letter code: N-isopropylammelide isopropyl amidohydrolase (403 aa).

His-60, His-62, and His-217 together coordinate Zn(2+). The active-site Proton donor/acceptor is His-249. Asp-303 is a binding site for Zn(2+).

This sequence belongs to the metallo-dependent hydrolases superfamily. N-acyl-D-amino-acid deacylase family. Homotetramer. It depends on Zn(2+) as a cofactor.

It is found in the cytoplasm. It carries out the reaction N-isopropylammelide + H2O + H(+) = isopropylamine + cyanurate. The protein operates within xenobiotic degradation; atrazine degradation; cyanurate from atrazine: step 3/3. With respect to regulation, inhibited by N-ethylammeline, N-hydroxyethylammeline, N-isopropylammeline, ammeline and 2-amino-4hydroxy-1,3,5-s-triazine. In terms of biological role, transforms N-isopropylammelide to cyanuric acid and isopropylamine. The protein is N-isopropylammelide isopropyl amidohydrolase (atzC) of Pseudomonas sp. (strain ADP).